We begin with the raw amino-acid sequence, 251 residues long: Low molecular mass lipoprotein PBMHPC-21 (251 aa).

The first 16 residues, 1-16 (MKFVVVFASCVLAVSA), serve as a signal peptide directing secretion.

It belongs to the 30 kDa lipoprotein family.

The protein resides in the secreted. In Bombyx mori (Silk moth), this protein is Low molecular mass lipoprotein PBMHPC-21.